Reading from the N-terminus, the 85-residue chain is MSSLDKTMHFDFNQNKGKNIRDTLEDVYKALEEKGYSPINQIVGYLLSGDPAYIPRHNDARNLILKHERDEIIEELVKSYLGKDK.

It belongs to the UPF0297 family.

This is UPF0297 protein LBUL_1485 from Lactobacillus delbrueckii subsp. bulgaricus (strain ATCC BAA-365 / Lb-18).